The chain runs to 330 residues: Small ribosomal subunit protein uS2 (330 aa).

This sequence belongs to the universal ribosomal protein uS2 family.

In Bradyrhizobium sp. (strain BTAi1 / ATCC BAA-1182), this protein is Small ribosomal subunit protein uS2.